A 151-amino-acid chain; its full sequence is Cytochrome c-type biogenesis protein CcmE (151 aa).

Residues 1–8 (MNPQRKKR) are Cytoplasmic-facing. Residues 9 to 29 (LLLIVGLLVGVGVAVGFALSA) traverse the membrane as a helical; Signal-anchor for type II membrane protein segment. Topologically, residues 30–151 (LQQNINLFYT…QAAAGGETKP (122 aa)) are periplasmic. Residues His124 and Tyr128 each contribute to the heme site.

The protein belongs to the CcmE/CycJ family.

It localises to the cell inner membrane. Its function is as follows. Heme chaperone required for the biogenesis of c-type cytochromes. Transiently binds heme delivered by CcmC and transfers the heme to apo-cytochromes in a process facilitated by CcmF and CcmH. In Pseudomonas putida (strain ATCC 700007 / DSM 6899 / JCM 31910 / BCRC 17059 / LMG 24140 / F1), this protein is Cytochrome c-type biogenesis protein CcmE.